Reading from the N-terminus, the 224-residue chain is Envelope glycoprotein L (224 aa).

Positions 1–16 (MGFVCLFGLVVMGAWG) are cleaved as a signal peptide. The interval 20–161 (GSQATEYVLR…FDYSRTRRCV (142 aa)) is interaction with gH. One can recognise a gL alphaherpesvirus-type domain in the interval 23 to 201 (ATEYVLRSVI…LATQPPVLAL (179 aa)). Disulfide bonds link Cys-44-Cys-76 and Cys-149-Cys-160. Residues 168–224 (PANTTSTWEPPVSSDDEASSQSKPLATQPPVLALSNAPPRRVSPTRGRRRHTRLRRN) are disordered. Basic residues predominate over residues 213–224 (RGRRRHTRLRRN).

The protein belongs to the herpesviridae glycoprotein L (gL) family. Alphaherpesvirinae gL subfamily. As to quaternary structure, interacts with glycoprotein H (gH); this interaction is necessary for the correct processing and cell surface expression of gH. The heterodimer gH/gL seems to interact with gB trimers during fusion.

The protein resides in the virion membrane. It is found in the host cell membrane. Its subcellular location is the host Golgi apparatus. The protein localises to the host trans-Golgi network. In terms of biological role, the heterodimer glycoprotein H-glycoprotein L is required for the fusion of viral and plasma membranes leading to virus entry into the host cell. Acts as a functional inhibitor of gH and maintains gH in an inhibited form. Upon binding to host integrins, gL dissociates from gH leading to activation of the viral fusion glycoproteins gB and gH. In Homo sapiens (Human), this protein is Envelope glycoprotein L.